Here is a 185-residue protein sequence, read N- to C-terminus: Large ribosomal subunit protein uL5 (185 aa).

It belongs to the universal ribosomal protein uL5 family. Part of the 50S ribosomal subunit; part of the 5S rRNA subcomplex. Contacts the 5S rRNA and the P site tRNA. Forms a bridge to the 30S subunit in the 70S ribosome. Both N-terminus methionine truncation and retention have been observed for this protein. Post-translationally, may be methylated twice, on undetermined residues.

This is one of the proteins that bind and probably mediate the attachment of the 5S RNA into the large ribosomal subunit, where it forms part of the central protuberance. In the 70S ribosome it contacts protein S13 of the 30S subunit (bridge B1b), connecting the 2 subunits; this bridge is implicated in subunit movement. Contacts the P site tRNA; the 5S rRNA and some of its associated proteins might help stabilize positioning of ribosome-bound tRNAs. The sequence is that of Large ribosomal subunit protein uL5 from Rhodopseudomonas palustris (strain ATCC BAA-98 / CGA009).